The chain runs to 124 residues: S-adenosylmethionine decarboxylase proenzyme (124 aa).

The Schiff-base intermediate with substrate; via pyruvic acid role is filled by Ser-71. Position 71 is a pyruvic acid (Ser); by autocatalysis (Ser-71). The active-site Proton acceptor; for processing activity is the His-76. Cys-91 (proton donor; for catalytic activity) is an active-site residue.

Belongs to the prokaryotic AdoMetDC family. Type 1 subfamily. As to quaternary structure, heterotetramer of two alpha and two beta chains arranged as a dimer of alpha/beta heterodimers. Requires pyruvate as cofactor. Post-translationally, is synthesized initially as an inactive proenzyme. Formation of the active enzyme involves a self-maturation process in which the active site pyruvoyl group is generated from an internal serine residue via an autocatalytic post-translational modification. Two non-identical subunits are generated from the proenzyme in this reaction, and the pyruvate is formed at the N-terminus of the alpha chain, which is derived from the carboxyl end of the proenzyme. The post-translation cleavage follows an unusual pathway, termed non-hydrolytic serinolysis, in which the side chain hydroxyl group of the serine supplies its oxygen atom to form the C-terminus of the beta chain, while the remainder of the serine residue undergoes an oxidative deamination to produce ammonia and the pyruvoyl group blocking the N-terminus of the alpha chain.

The catalysed reaction is S-adenosyl-L-methionine + H(+) = S-adenosyl 3-(methylsulfanyl)propylamine + CO2. Its pathway is amine and polyamine biosynthesis; S-adenosylmethioninamine biosynthesis; S-adenosylmethioninamine from S-adenosyl-L-methionine: step 1/1. Competitively inhibited by methylglyoxal bis-guanylhydrazone. Irreversibly inhibited by NaBH(4) in vitro. Functionally, catalyzes the decarboxylation of S-adenosylmethionine to S-adenosylmethioninamine (dcAdoMet), the propylamine donor required for the synthesis of the polyamines spermine and spermidine from the diamine putrescine. Has no arginine decarboxylase (ArgDC) activity. The sequence is that of S-adenosylmethionine decarboxylase proenzyme (speH) from Saccharolobus solfataricus (strain ATCC 35092 / DSM 1617 / JCM 11322 / P2) (Sulfolobus solfataricus).